Reading from the N-terminus, the 1961-residue chain is Myosin-9 (1961 aa).

At alanine 2 the chain carries N-acetylalanine. Residues 2–838 form a mediates interaction with LIMCH1 region; that stretch reads AQQAADKYLY…RLFTKVKPLL (837 aa). Lysine 8 bears the N6-acetyllysine mark. Phosphotyrosine is present on tyrosine 11. The Myosin N-terminal SH3-like domain maps to 27–77; it reads GAKKLVWVPSTKNGFEPASLKEEVGEEAIVELVENGKKVKVNKDDIQKMNP. Positions 81–776 constitute a Myosin motor domain; the sequence is SKVEDMAELT…VLAHLEEERD (696 aa). Lysine 102 carries the N6-acetyllysine modification. Residue 174 to 181 coordinates ATP; the sequence is GESGAGKT. Lysine 299, lysine 435, and lysine 613 each carry N6-acetyllysine. Phosphoserine is present on serine 628. Residues 654–676 are actin-binding; the sequence is LAKLMATLRNTNPNFVCCIIPNH. Residue tyrosine 754 is modified to Phosphotyrosine. One can recognise an IQ domain in the interval 779-808; it reads ITDVIIGFQACCRGYLARKAFAKRQQQLTA. The stretch at 841–1927 forms a coiled coil; it reads IRHEDELLAK…LKNKLRRGDM (1087 aa). At lysine 850 the chain carries N6-succinyllysine. Residues lysine 860, lysine 975, and lysine 1024 each carry the N6-acetyllysine modification. Over residues 1035–1055 the composition is skewed to basic and acidic residues; the sequence is RLRREEKQRQELEKTRRKLEG. The disordered stretch occupies residues 1035–1057; that stretch reads RLRREEKQRQELEKTRRKLEGDS. Serine 1114 is modified (phosphoserine). An N6-acetyllysine mark is found at lysine 1234 and lysine 1249. Positions 1331–1353 are disordered; sequence LKQMEDEKNSFREQLEEEEEEAK. The segment covering 1332-1344 has biased composition (basic and acidic residues); that stretch reads KQMEDEKNSFREQ. 6 positions are modified to N6-acetyllysine: lysine 1358, lysine 1393, lysine 1405, lysine 1411, lysine 1460, and lysine 1639. Residue lysine 1670 is modified to N6-succinyllysine. Serine 1715 carries the post-translational modification Phosphoserine. N6-acetyllysine occurs at positions 1794, 1803, and 1846. Residues 1878–1910 are disordered; sequence RQLEEAEEEAQRANASRRKLQRELEDATETADA. At arginine 1924 the chain carries Omega-N-methylarginine. The tract at residues 1938–1961 is disordered; it reads KGTGDCSDEEVDGKADGADAKATE. The residue at position 1944 (serine 1944) is a Phosphoserine. The segment covering 1949–1961 has biased composition (basic and acidic residues); that stretch reads DGKADGADAKATE.

Belongs to the TRAFAC class myosin-kinesin ATPase superfamily. Myosin family. As to quaternary structure, myosin is a hexameric protein that consists of 2 heavy chain subunits (MHC), 2 alkali light chain subunits (MLC) and 2 regulatory light chain subunits (MLC-2). Interacts with RASIP1. Interacts with DDR1. Interacts with PDLIM2. Interacts with SVIL. Interacts with HTRA3. Interacts with Myo7a. Interacts with CFAP95. Interacts with LIMCH1; independently of the integration of MYH9 into the myosin complex. Interacts with RAB3A. Interacts with ZBED4. Interacts with S100A4; this interaction increases cell motility. ISGylated. In terms of processing, ubiquitination.

The protein resides in the cytoplasm. Its subcellular location is the cytoskeleton. It is found in the cell cortex. It localises to the cytoplasmic vesicle. The protein localises to the secretory vesicle. The protein resides in the cortical granule. Cellular myosin that appears to play a role in cytokinesis, cell shape, and specialized functions such as secretion and capping. Required for cortical actin clearance prior to oocyte exocytosis. Promotes cell motility in conjunction with S100A4. During cell spreading, plays an important role in cytoskeleton reorganization, focal contact formation (in the margins but not the central part of spreading cells), and lamellipodial retraction; this function is mechanically antagonized by MYH10. This chain is Myosin-9 (Myh9), found in Rattus norvegicus (Rat).